The chain runs to 275 residues: HUWE1-associated protein modifying stress responses 1 (275 aa).

The span at 32-44 (AEQDEQLPPELQE) shows a compositional bias: acidic residues. The disordered stretch occupies residues 32 to 51 (AEQDEQLPPELQEEAAAAAQ). The interval 80 to 152 (QQPGLSLWVP…LISFLCGKVP (73 aa)) is HUWE1-binding and HAPSTR1 oligomerization (HBO) domain. 3 disordered regions span residues 155–181 (RNSRAPPRLTVVSPNRATSTETSSSVE), 204–227 (SVRSSTPGSPTHVSSGSNASRRRN), and 250–275 (GTRKRTSAQCGDVITDSPTHKRNRMI). S167 carries the post-translational modification Phosphoserine. Over residues 172-181 (TSTETSSSVE) the composition is skewed to low complexity. Polar residues predominate over residues 204–216 (SVRSSTPGSPTHV). S212 bears the Phosphoserine mark.

Belongs to the HAPSTR1 family. In terms of assembly, homooligomer. Heterooligomer with HAPSTR2; the interaction is direct and stabilizes HAPSTR1. Interacts with HUWE1. Post-translationally, ubiquitinated by HUWE1. Promotes HAPSTR1 degradation through polyubiquitination.

The protein localises to the nucleus. The protein resides in the cytoplasm. Its function is as follows. Acts as a central player within a network of stress response pathways promoting cellular adaptability. The E3 ligase HUWE1 assists HAPSTR1 in controlling stress signaling and in turn, HUWE1 feeds back to promote the degradation of HAPSTR1. HAPSTR1 represents a central coordination mechanism for stress response programs. Functions as a negative regulator of TP53/P53 in the cellular response to telomere erosion and probably also DNA damage. May attenuate p53/TP53 activation through the E3 ubiquitin ligase HUWE1. In Homo sapiens (Human), this protein is HUWE1-associated protein modifying stress responses 1.